The following is a 570-amino-acid chain: MTKTLPREEYTDLFGATVGDRIRLGDTSLLAEIEHDHATYGDEAVFGGGKTMRDGMGMQSGTTQADGALDWVFSNVVVVDPVLGIRKGDIGVRNGRIVGVGKAGNPDTMDGVDDELVVGPSTDTVPADGLIATPGGLDIHVHFNSPQLVDHALASGITTMFGGGYGGGATTCTPGPNNVKRFLQAADEWPVNVGFYGKGNSSQPEGLAEQVEAGACGMKLHEDWGSTPAAIDTCLEYAESADIQVCIHTDTLNESGFVEETFDAIDGRAIHTFHIEGAGGGHAPDVLELVGHEHMLPSSTNPSMPYTENTFDEHLDMVMVCHHLNPDVPEDVAFAESRIRAETIAAEDVLHDTGAISMMTSDSQAMGRMAEVISRTWQTADKMKQQRGPLPEDDGTDADNHRIKRYVAKYTINPAIVAGIDDYVGSIEPGKLADIVLWEPAFFGIKPKTVIKGGFPVYSQMGEANGSLMTCEPVEMRPRAGAMGNAKHGLSVTFVSGTAHEAGVGDAYGLDTPVRPVDGTRSVRKADMLYNDYCPDDIDIDAQTFEVSIDGEHVTCEPADELPLAQRYHL.

The 436-residue stretch at 135–570 (GGLDIHVHFN…ELPLAQRYHL (436 aa)) folds into the Urease domain. Residues His-140, His-142, and Lys-219 each coordinate Ni(2+). Lys-219 carries the post-translational modification N6-carboxylysine. His-221 is a binding site for substrate. Ni(2+) is bound by residues His-248 and His-274. His-322 serves as the catalytic Proton donor. Residue Asp-362 coordinates Ni(2+).

Belongs to the metallo-dependent hydrolases superfamily. Urease alpha subunit family. As to quaternary structure, heterotrimer of UreA (gamma), UreB (beta) and UreC (alpha) subunits. Three heterotrimers associate to form the active enzyme. Requires Ni cation as cofactor. In terms of processing, carboxylation allows a single lysine to coordinate two nickel ions.

The protein resides in the cytoplasm. It catalyses the reaction urea + 2 H2O + H(+) = hydrogencarbonate + 2 NH4(+). It participates in nitrogen metabolism; urea degradation; CO(2) and NH(3) from urea (urease route): step 1/1. The polypeptide is Urease subunit alpha (Natronomonas pharaonis (strain ATCC 35678 / DSM 2160 / CIP 103997 / JCM 8858 / NBRC 14720 / NCIMB 2260 / Gabara) (Halobacterium pharaonis)).